Reading from the N-terminus, the 679-residue chain is Protein CASP (679 aa).

The Cytoplasmic segment spans residues 1–614 (MDTSVYSHAL…VILQNKMTRM (614 aa)). Coiled coils occupy residues 14–90 (AKAD…EKVL) and 178–341 (RNWK…NYSD). A Phosphoserine modification is found at serine 364. Residues 385-444 (ANKKLQATLAEYRSKSTAQEEERNELKKSVDQLKQQIATLKEANEKLETDLEKVENVSPH) are a coiled coil. Serine 450 and serine 453 each carry phosphoserine. The stretch at 492–540 (IVTKQRDRFRSRNMDLEKQLRQGNSEKGKLKLEISKLKGDNTKLYERIR) forms a coiled coil. Residue serine 555 is modified to Phosphoserine. The chain crosses the membrane as a helical; Anchor for type IV membrane protein span at residues 615-635 (VFLFYCIGLHGLVFMMSMYVI). Residues 636 to 679 (NISGYMTPEVGIVQSAKSSSNLNGGLGGAEKVAAGVGSVHGINR) are Lumenal-facing.

It belongs to the CASP family.

It is found in the golgi apparatus membrane. In terms of biological role, may be involved in intra-Golgi transport. This Saccharomyces cerevisiae (strain ATCC 204508 / S288c) (Baker's yeast) protein is Protein CASP (COY1).